The chain runs to 176 residues: Lipoprotein signal peptidase (176 aa).

The next 4 membrane-spanning stretches (helical) occupy residues 11–31, 38–58, 76–96, and 101–121; these read AFVA…LDQL, ATMQ…VLVF, WFFT…MHQH, and LLPA…VDRL. Catalysis depends on residues Asp128 and Asp146. The helical transmembrane segment at 139–159 threads the bilayer; sequence WPAFNLADSAITLGVGLMLWA.

The protein belongs to the peptidase A8 family.

It is found in the cell inner membrane. It carries out the reaction Release of signal peptides from bacterial membrane prolipoproteins. Hydrolyzes -Xaa-Yaa-Zaa-|-(S,diacylglyceryl)Cys-, in which Xaa is hydrophobic (preferably Leu), and Yaa (Ala or Ser) and Zaa (Gly or Ala) have small, neutral side chains.. It participates in protein modification; lipoprotein biosynthesis (signal peptide cleavage). This protein specifically catalyzes the removal of signal peptides from prolipoproteins. The protein is Lipoprotein signal peptidase of Azoarcus sp. (strain BH72).